The following is a 513-amino-acid chain: Pleiotropic regulator 1 (513 aa).

At Met-1 the chain carries N-acetylmethionine. The disordered stretch occupies residues 60–79 (TSKENLKEKGPQNATDSYPH). Residue Ser-119 is modified to Phosphoserine. Positions 136 to 160 (VDANRTGPAGSEYRHPGASDRSQPT) are disordered. The residue at position 200 (Ser-200) is a Phosphoserine. WD repeat units lie at residues 201–240 (GHLGWVRCIAVEPGNQWFVTGSADRTIKIWDLASGKLKLS), 243–282 (GHISTVRGVIVSTRSPYLFSCGEDKQVKCWDLEYNKVIRH), 285–324 (GHLSAVYGLDLHPTLDVLVTCSRDSTARIWDVRTKASVHT), 327–366 (GHTNAVATVRCQAAEPQIITGSHDTTIRLWDLVAGKTRVT), 369–409 (NHKK…QNLS), 410–448 (GHNAIINTLAVNADGVLVSGADNGTMHLWDWRTGYNFQR), and 459–498 (DSESGIFACAFDRSESRLLTAEADKTIKVYREDETATEET). At Ser-390 the chain carries Phosphoserine.

This sequence belongs to the WD repeat PRL1/PRL2 family. As to quaternary structure, identified in the spliceosome C complex. Component of the PRP19-CDC5L splicing complex composed of a core complex comprising a homotetramer of PRPF19, CDC5L, PLRG1 and BCAS2, and at least three less stably associated proteins CTNNBL1, CWC15 and HSPA8. Interacts (via its WD40 repeat domain) directly with CDC5L (via its C-terminal); the interaction is required for mRNA splicing but not for spliceosome assembly. Component of the minor spliceosome, which splices U12-type introns. Within this complex, interacts with CRIPT. Also interacts directly in the complex with BCAS2 and PRPF19. Interacts with USB1.

It localises to the nucleus. The protein resides in the nucleus speckle. Functionally, involved in pre-mRNA splicing as component of the spliceosome. Component of the PRP19-CDC5L complex that forms an integral part of the spliceosome and is required for activating pre-mRNA splicing. As a component of the minor spliceosome, involved in the splicing of U12-type introns in pre-mRNAs. This chain is Pleiotropic regulator 1 (Plrg1), found in Mus musculus (Mouse).